We begin with the raw amino-acid sequence, 959 residues long: MLIRHNRSSIAKPILLFLGCLVIGQLGVLVVANSLWFTEMGYLNTFLKQLSWQLGLGWGSAILSLLFIFTNLRLAQRFRWQKAKEDSYPLSPQSPSINLLGLLIIATGIGAWIGSMLLYYSKLALSLWTPDFNLPNLSSSLSSPLEIVWIRQVLTDISSNLWQGLIIAFLVLGLLIKTEYFLRIISIVFTVMLSFIIAGQWANFLKYFYGVPFNINDPQYGNDLGFYIFQLPLWQLLELWLTGVGIYTLFAVILTYLFSADSLSLGTFPGFSRPQLRHLYALWSGLMGLLVLHHIIQRYLLLYSPEGVVYGAGYIDVHVGQFIEIILGIIAGITSIWLGEKALFGKKDRRKLYKNTKKKLVFFPYLVPVFLYLIVWISGTIISGLLQRTVVQPNELVRERPYIERSIQSTRAAFSLDRIDAQVFDPQAELNAEVLERNHLTIDNIRLWDTKPLLETNRQLQQIRLYYKFPDADIDRYRVRVGLPEKIEERQISEKQQTIIAARELDYSAVPTSANTWVNKHLVYTHGYGFTLSPVNLVAAGGLPYYFVKDIGTNKDEGALQTSSELIDYSIPIGKPRIYYGELTNNYVMTPTTVEELDFPSGDGNVYNTYDGKGGILVGTGWRRWLFALYLRDWQMLFSQDFTPETRLLMRRDIQNRVQTIAPFLNYDRNPYLVAADVGDSSSKLHWIIDAYTISNRYPYSDPGKDKFNYIRNSVKVVVDAYHGTVNFYVADENDPIIQTWSKIFPHLFKSLAEMPKTLRSHIRYPEDLFSTQAERLLTYHMTDPQVFYNREDQWEIPLEIYGTEPQAVSPYYLIMKLPDSDKEEFILLHPYTPSSRQNLIAWLAARSDDREYGKLLLYQFPKQRLVYGPNQIEALINQDPDISQQISLWNRDGSKVLQGHLLIIPIEQSLLYVEPLYLVADQNSVPTIARVTVAYQNKIVMEPTLKEALEKLFSGDQS.

Transmembrane regions (helical) follow at residues 13 to 33 (PILL…VVAN), 50 to 70 (LSWQ…FIFT), 99 to 119 (LLGL…MLLY), 156 to 176 (DISS…GLLI), 184 to 204 (IISI…WANF), 239 to 259 (LWLT…YLFS), 276 to 296 (LRHL…HHII), 319 to 339 (VGQF…IWLG), and 362 to 382 (FFPY…GTII).

This sequence belongs to the UPF0182 family.

The protein localises to the cell membrane. The polypeptide is UPF0182 protein MAE_41360 (Microcystis aeruginosa (strain NIES-843 / IAM M-2473)).